A 117-amino-acid polypeptide reads, in one-letter code: NADH-ubiquinone oxidoreductase chain 3 (117 aa).

3 helical membrane-spanning segments follow: residues 5-25 (ALSS…AWVL), 57-77 (FFLL…LMPL), and 86-106 (VFTT…GLIH).

Belongs to the complex I subunit 3 family.

The protein resides in the mitochondrion membrane. The enzyme catalyses a ubiquinone + NADH + 5 H(+)(in) = a ubiquinol + NAD(+) + 4 H(+)(out). Its function is as follows. Core subunit of the mitochondrial membrane respiratory chain NADH dehydrogenase (Complex I) that is believed to belong to the minimal assembly required for catalysis. Complex I functions in the transfer of electrons from NADH to the respiratory chain. The immediate electron acceptor for the enzyme is believed to be ubiquinone. The protein is NADH-ubiquinone oxidoreductase chain 3 (ND3) of Lumbricus terrestris (Common earthworm).